A 227-amino-acid polypeptide reads, in one-letter code: Cytochrome c oxidase subunit 2 (227 aa).

Topologically, residues 1–14 are mitochondrial intermembrane; it reads MAYPFQMGLQDATS. Residues 15 to 45 form a helical membrane-spanning segment; the sequence is PIMEELLHFHDHTLMIVFLISSLVLYIISLM. Residues 46–59 lie on the Mitochondrial matrix side of the membrane; the sequence is LTTKLTHTSTMDAQ. Residues 60–87 traverse the membrane as a helical segment; that stretch reads EVETIWTILPAIILILIALPSLRILYMM. The Mitochondrial intermembrane segment spans residues 88 to 227; sequence DEINNPSLTV…HFEKWSASLL (140 aa). Positions 161, 196, 198, 200, 204, and 207 each coordinate Cu cation. Position 198 (Glu198) interacts with Mg(2+).

The protein belongs to the cytochrome c oxidase subunit 2 family. Component of the cytochrome c oxidase (complex IV, CIV), a multisubunit enzyme composed of 14 subunits. The complex is composed of a catalytic core of 3 subunits MT-CO1, MT-CO2 and MT-CO3, encoded in the mitochondrial DNA, and 11 supernumerary subunits COX4I, COX5A, COX5B, COX6A, COX6B, COX6C, COX7A, COX7B, COX7C, COX8 and NDUFA4, which are encoded in the nuclear genome. The complex exists as a monomer or a dimer and forms supercomplexes (SCs) in the inner mitochondrial membrane with NADH-ubiquinone oxidoreductase (complex I, CI) and ubiquinol-cytochrome c oxidoreductase (cytochrome b-c1 complex, complex III, CIII), resulting in different assemblies (supercomplex SCI(1)III(2)IV(1) and megacomplex MCI(2)III(2)IV(2)). Found in a complex with TMEM177, COA6, COX18, COX20, SCO1 and SCO2. Interacts with TMEM177 in a COX20-dependent manner. Interacts with COX20. Interacts with COX16. The cofactor is Cu cation.

Its subcellular location is the mitochondrion inner membrane. It carries out the reaction 4 Fe(II)-[cytochrome c] + O2 + 8 H(+)(in) = 4 Fe(III)-[cytochrome c] + 2 H2O + 4 H(+)(out). Its function is as follows. Component of the cytochrome c oxidase, the last enzyme in the mitochondrial electron transport chain which drives oxidative phosphorylation. The respiratory chain contains 3 multisubunit complexes succinate dehydrogenase (complex II, CII), ubiquinol-cytochrome c oxidoreductase (cytochrome b-c1 complex, complex III, CIII) and cytochrome c oxidase (complex IV, CIV), that cooperate to transfer electrons derived from NADH and succinate to molecular oxygen, creating an electrochemical gradient over the inner membrane that drives transmembrane transport and the ATP synthase. Cytochrome c oxidase is the component of the respiratory chain that catalyzes the reduction of oxygen to water. Electrons originating from reduced cytochrome c in the intermembrane space (IMS) are transferred via the dinuclear copper A center (CU(A)) of subunit 2 and heme A of subunit 1 to the active site in subunit 1, a binuclear center (BNC) formed by heme A3 and copper B (CU(B)). The BNC reduces molecular oxygen to 2 water molecules using 4 electrons from cytochrome c in the IMS and 4 protons from the mitochondrial matrix. The polypeptide is Cytochrome c oxidase subunit 2 (MT-CO2) (Ailurus fulgens (Himalayan red panda)).